The chain runs to 341 residues: Muscleblind-like protein 1 (341 aa).

At Thr6 the chain carries Phosphothreonine. 4 C3H1-type zinc fingers span residues 13-41 (WLTL…HPSK), 47-73 (NGRV…HPPP), 178-206 (TDRL…HPAD), and 214-240 (DNTV…HPPA).

Belongs to the muscleblind family. In terms of assembly, interacts with DDX1 and YBX1. Interacts with HNRNPH1; the interaction in RNA-independent. Interacts with RBPMS; the interaction allows cooperative assembly of RNA-bound stable cell-specific alternative splicing regulatory complexes. Highly expressed in cardiac and skeletal muscle. Weakly expressed in heart and eye (at protein level).

It is found in the nucleus. It localises to the cytoplasm. Its subcellular location is the cytoplasmic granule. Functionally, mediates pre-mRNA alternative splicing regulation. Acts either as activator or repressor of splicing on specific pre-mRNA targets. Inhibits cardiac troponin-T (TNNT2) pre-mRNA exon inclusion but induces insulin receptor (IR) pre-mRNA exon inclusion in muscle. Antagonizes the alternative splicing activity pattern of CELF proteins. Regulates the TNNT2 exon 5 skipping through competition with U2AF2. Inhibits the formation of the spliceosome A complex on intron 4 of TNNT2 pre-mRNA. Binds to the stem-loop structure within the polypyrimidine tract of TNNT2 intron 4 during spliceosome assembly. Binds to the 5'-YGCU(U/G)Y-3'consensus sequence. Binds to the IR RNA. Binds to CUG triplet repeat expansion in myotonic dystrophy muscle cells by sequestering the target RNAs. Together with RNA binding proteins RBPMS and RBFOX2, activates vascular smooth muscle cells alternative splicing events. Regulates NCOR2 alternative splicing. This is Muscleblind-like protein 1 (Mbnl1) from Mus musculus (Mouse).